We begin with the raw amino-acid sequence, 85 residues long: BmK AGP-SYPU2 (85 aa).

An N-terminal signal peptide occupies residues 1–19 (MNYMVIISLALLVMTGVES). One can recognise an LCN-type CS-alpha/beta domain in the interval 21–83 (KDGYIADDRN…ARIMKPGRCN (63 aa)). Cystine bridges form between Cys31–Cys82, Cys35–Cys55, Cys41–Cys65, and Cys45–Cys67.

This sequence belongs to the long (4 C-C) scorpion toxin superfamily. Sodium channel inhibitor family. Alpha subfamily. In terms of tissue distribution, expressed by the venom gland.

It is found in the secreted. Its function is as follows. Alpha toxins bind voltage-independently at site-3 of sodium channels (Nav) and inhibit the inactivation of the activated channels, thereby blocking neuronal transmission. Shows analgesic activity when intraperitoneally injected into mice. This is BmK AGP-SYPU2 from Olivierus martensii (Manchurian scorpion).